The following is a 496-amino-acid chain: Glycerol kinase (496 aa).

An ADP-binding site is contributed by Thr-11. Thr-11, Thr-12, and Ser-13 together coordinate ATP. Thr-11 contributes to the sn-glycerol 3-phosphate binding site. Arg-15 is a binding site for ADP. Arg-81, Glu-82, Tyr-133, and Asp-242 together coordinate sn-glycerol 3-phosphate. Positions 81, 82, 133, 242, and 243 each coordinate glycerol. Thr-264 and Gly-307 together coordinate ADP. 4 residues coordinate ATP: Thr-264, Gly-307, Gln-311, and Gly-408. The ADP site is built by Gly-408 and Asn-412.

The protein belongs to the FGGY kinase family.

The enzyme catalyses glycerol + ATP = sn-glycerol 3-phosphate + ADP + H(+). It functions in the pathway polyol metabolism; glycerol degradation via glycerol kinase pathway; sn-glycerol 3-phosphate from glycerol: step 1/1. Its activity is regulated as follows. Inhibited by fructose 1,6-bisphosphate (FBP). In terms of biological role, key enzyme in the regulation of glycerol uptake and metabolism. Catalyzes the phosphorylation of glycerol to yield sn-glycerol 3-phosphate. This Aromatoleum aromaticum (strain DSM 19018 / LMG 30748 / EbN1) (Azoarcus sp. (strain EbN1)) protein is Glycerol kinase.